The sequence spans 273 residues: Formamidopyrimidine-DNA glycosylase (273 aa).

Catalysis depends on P2, which acts as the Schiff-base intermediate with DNA. The active-site Proton donor is E3. The active-site Proton donor; for beta-elimination activity is the K57. Residues H91, R110, and K151 each coordinate DNA. Residues 236–270 form an FPG-type zinc finger; it reads QVYGRKGEACNDCGTIIEAKVIGQRNSYFCPHCQI. The active-site Proton donor; for delta-elimination activity is the R260.

Belongs to the FPG family. As to quaternary structure, monomer. Requires Zn(2+) as cofactor.

It catalyses the reaction Hydrolysis of DNA containing ring-opened 7-methylguanine residues, releasing 2,6-diamino-4-hydroxy-5-(N-methyl)formamidopyrimidine.. The enzyme catalyses 2'-deoxyribonucleotide-(2'-deoxyribose 5'-phosphate)-2'-deoxyribonucleotide-DNA = a 3'-end 2'-deoxyribonucleotide-(2,3-dehydro-2,3-deoxyribose 5'-phosphate)-DNA + a 5'-end 5'-phospho-2'-deoxyribonucleoside-DNA + H(+). Its function is as follows. Involved in base excision repair of DNA damaged by oxidation or by mutagenic agents. Acts as a DNA glycosylase that recognizes and removes damaged bases. Has a preference for oxidized purines, such as 7,8-dihydro-8-oxoguanine (8-oxoG). Has AP (apurinic/apyrimidinic) lyase activity and introduces nicks in the DNA strand. Cleaves the DNA backbone by beta-delta elimination to generate a single-strand break at the site of the removed base with both 3'- and 5'-phosphates. The protein is Formamidopyrimidine-DNA glycosylase of Actinobacillus pleuropneumoniae serotype 7 (strain AP76).